Here is a 693-residue protein sequence, read N- to C-terminus: Polyribonucleotide nucleotidyltransferase (693 aa).

Mg(2+) is bound by residues Asp486 and Asp492. Positions 553–612 (PRFTTLKIHPDKIRDVIGKGGATIRALTEETGTSIDISDDGTVKIASVDKAAGDEARRRI) constitute a KH domain. The S1 motif domain occupies 622–690 (GRIYEGRVVK…KQGRIRLSMK (69 aa)).

This sequence belongs to the polyribonucleotide nucleotidyltransferase family. Component of the RNA degradosome, which is a multiprotein complex involved in RNA processing and mRNA degradation. It depends on Mg(2+) as a cofactor.

It is found in the cytoplasm. It carries out the reaction RNA(n+1) + phosphate = RNA(n) + a ribonucleoside 5'-diphosphate. In terms of biological role, involved in mRNA degradation. Catalyzes the phosphorolysis of single-stranded polyribonucleotides processively in the 3'- to 5'-direction. The chain is Polyribonucleotide nucleotidyltransferase from Thioalkalivibrio sulfidiphilus (strain HL-EbGR7).